A 210-amino-acid polypeptide reads, in one-letter code: MKDPIDLYMNTLVPMVVEQTSRGERAYDIFSRMLKERIIFLSGPVHDGMSSLICAQLLFLEAENPSKEIAMYINSPGGVVTSGLSIYDTMQYIRPKVSTLVIGQAASMGSLLLTAGEKGMRFSLPNSRVMVHQPSGGYQGQATDIMIHARETEKLKRRLNEIYVKHTGQDLDTVEAALERDNFMSAEDAKAWGLIDEILESRGKTDDTAK.

Residue serine 107 is the Nucleophile of the active site. The active site involves histidine 132.

The protein belongs to the peptidase S14 family. As to quaternary structure, fourteen ClpP subunits assemble into 2 heptameric rings which stack back to back to give a disk-like structure with a central cavity, resembling the structure of eukaryotic proteasomes.

The protein localises to the cytoplasm. The catalysed reaction is Hydrolysis of proteins to small peptides in the presence of ATP and magnesium. alpha-casein is the usual test substrate. In the absence of ATP, only oligopeptides shorter than five residues are hydrolyzed (such as succinyl-Leu-Tyr-|-NHMec, and Leu-Tyr-Leu-|-Tyr-Trp, in which cleavage of the -Tyr-|-Leu- and -Tyr-|-Trp bonds also occurs).. Functionally, cleaves peptides in various proteins in a process that requires ATP hydrolysis. Has a chymotrypsin-like activity. Plays a major role in the degradation of misfolded proteins. This is ATP-dependent Clp protease proteolytic subunit from Cereibacter sphaeroides (strain ATCC 17025 / ATH 2.4.3) (Rhodobacter sphaeroides).